The following is a 296-amino-acid chain: Pseudouridine-5'-phosphate glycosidase (296 aa).

E21 functions as the Proton donor in the catalytic mechanism. K81 and V101 together coordinate substrate. D130 is a Mn(2+) binding site. 132 to 134 serves as a coordination point for substrate; the sequence is SQD. The active-site Nucleophile is the K151.

The protein belongs to the pseudouridine-5'-phosphate glycosidase family. As to quaternary structure, homotrimer. Mn(2+) serves as cofactor.

It carries out the reaction D-ribose 5-phosphate + uracil = psi-UMP + H2O. Its function is as follows. Catalyzes the reversible cleavage of pseudouridine 5'-phosphate (PsiMP) to ribose 5-phosphate and uracil. Functions biologically in the cleavage direction, as part of a pseudouridine degradation pathway. This Fervidobacterium nodosum (strain ATCC 35602 / DSM 5306 / Rt17-B1) protein is Pseudouridine-5'-phosphate glycosidase.